The sequence spans 207 residues: Putative 3-methyladenine DNA glycosylase (207 aa).

It belongs to the DNA glycosylase MPG family.

The chain is Putative 3-methyladenine DNA glycosylase from Listeria monocytogenes serotype 4b (strain CLIP80459).